The primary structure comprises 454 residues: tRNA modification GTPase MnmE (454 aa).

(6S)-5-formyl-5,6,7,8-tetrahydrofolate-binding residues include R26, E84, and K123. The region spanning 219 to 378 (GLQVVIAGKP…LVDAITAHAG (160 aa)) is the TrmE-type G domain. A K(+)-binding site is contributed by N229. GTP is bound by residues 229–234 (NAGKSS), 248–254 (TDIAGTT), and 273–276 (DTAG). Position 233 (S233) interacts with Mg(2+). Residues T248, I250, and T253 each coordinate K(+). Residue T254 participates in Mg(2+) binding. K454 is a binding site for (6S)-5-formyl-5,6,7,8-tetrahydrofolate.

This sequence belongs to the TRAFAC class TrmE-Era-EngA-EngB-Septin-like GTPase superfamily. TrmE GTPase family. In terms of assembly, homodimer. Heterotetramer of two MnmE and two MnmG subunits. K(+) is required as a cofactor.

The protein resides in the cytoplasm. Functionally, exhibits a very high intrinsic GTPase hydrolysis rate. Involved in the addition of a carboxymethylaminomethyl (cmnm) group at the wobble position (U34) of certain tRNAs, forming tRNA-cmnm(5)s(2)U34. The polypeptide is tRNA modification GTPase MnmE (Acinetobacter baumannii (strain AYE)).